Consider the following 286-residue polypeptide: Co-chaperone protein DjlA (286 aa).

The Periplasmic portion of the chain corresponds to methionine 1–lysine 6. A helical membrane pass occupies residues isoleucine 7–histidine 31. Over leucine 32 to lysine 286 the chain is Cytoplasmic. Residues aspartate 220–lysine 286 form the J domain.

As to quaternary structure, homodimer.

It localises to the cell inner membrane. Regulatory DnaK co-chaperone. Direct interaction between DnaK and DjlA is needed for the induction of the wcaABCDE operon, involved in the synthesis of a colanic acid polysaccharide capsule, possibly through activation of the RcsB/RcsC phosphotransfer signaling pathway. The colanic acid capsule may help the bacterium survive conditions outside the host. This Haemophilus ducreyi (strain 35000HP / ATCC 700724) protein is Co-chaperone protein DjlA.